A 119-amino-acid polypeptide reads, in one-letter code: Large ribosomal subunit protein bL20 (119 aa).

It belongs to the bacterial ribosomal protein bL20 family.

Its function is as follows. Binds directly to 23S ribosomal RNA and is necessary for the in vitro assembly process of the 50S ribosomal subunit. It is not involved in the protein synthesizing functions of that subunit. In Granulibacter bethesdensis (strain ATCC BAA-1260 / CGDNIH1), this protein is Large ribosomal subunit protein bL20.